The sequence spans 127 residues: Promotilin (127 aa).

Positions 1–25 (MLSRKAVAALLLVHVTAMLASQTEG) are cleaved as a signal peptide. A disordered region spans residues 41–67 (REQNKRLRKSLRVQQRSKAAGRLEPQE).

Belongs to the motilin family. In terms of tissue distribution, present in the gut mucosa with the exception of the gastric corpus. Also present in medulla oblongata, nucleus of the solitary tract, hypophysis, spinal cord, hypothalamus, and cerebellum but not in the cerebral cortex.

It is found in the secreted. Plays an important role in the regulation of interdigestive gastrointestinal motility and indirectly causes rhythmic contraction of duodenal and colonic smooth muscle. The sequence is that of Promotilin (MLN) from Cavia porcellus (Guinea pig).